The sequence spans 372 residues: Delta-type opioid receptor (372 aa).

Topologically, residues 1–47 are extracellular; sequence MEPVPSARAELQFSLLANVSDTFPSAFPSASANASGSPGARSASSLA. Residues N18 and N33 are each glycosylated (N-linked (GlcNAc...) asparagine). Residues 48 to 75 traverse the membrane as a helical segment; that stretch reads LAIAITALYSAVCAVGLLGNVLVMFGIV. Topologically, residues 76 to 85 are cytoplasmic; the sequence is RYTKLKTATN. Residues 86–110 form a helical membrane-spanning segment; it reads IYIFNLALADALATSTLPFQSAKYL. Residues 111-122 lie on the Extracellular side of the membrane; that stretch reads METWPFGELLCK. C121 and C198 are oxidised to a cystine. The chain crosses the membrane as a helical span at residues 123–144; that stretch reads AVLSIDYYNMFTSIFTLTMMSV. At 145-163 the chain is on the cytoplasmic side; sequence DRYIAVCHPVKALDFRTPA. Residues 164–186 form a helical membrane-spanning segment; the sequence is KAKLINICIWVLASGVGVPIMVM. The Extracellular portion of the chain corresponds to 187-206; it reads AVTQPRDGAVVCTLQFPSPS. A helical membrane pass occupies residues 207–238; that stretch reads WYWDTVTKICVFLFAFVVPILIITVCYGLMLL. The Cytoplasmic segment spans residues 239 to 261; it reads RLRSVRLLSGSKEKDRSLRRITR. The chain crosses the membrane as a helical span at residues 262 to 284; it reads MVLVVVGAFVVCWAPIHIFVIVW. At 285 to 299 the chain is on the extracellular side; the sequence is TLVDINRRDPLVVAA. Residues 300–321 form a helical membrane-spanning segment; the sequence is LHLCIALGYANSSLNPVLYAFL. Residues 322–372 are Cytoplasmic-facing; it reads DENFKRCFRQLCRAPCGGQEPGSLRRPRQATARERVTACTPSDGPGGGAAA. C333 is lipidated: S-palmitoyl cysteine. The tract at residues 340–372 is disordered; the sequence is QEPGSLRRPRQATARERVTACTPSDGPGGGAAA.

The protein belongs to the G-protein coupled receptor 1 family. In terms of assembly, may form homooligomers. Forms a heterodimer with OPRM1. Interacts with GPRASP1. Interacts with RTP4; the interaction promotes cell surface localization of the OPRD1-OPRM1 heterodimer. Post-translationally, ubiquitinated. A basal ubiquitination seems not to be related to degradation. Ubiquitination is increased upon formation of OPRM1:OPRD1 oligomers leading to proteasomal degradation; the ubiquitination is diminished by RTP4. In terms of tissue distribution, detected in brain, brain stem and brain cortex.

Its subcellular location is the cell membrane. In terms of biological role, G-protein coupled receptor that functions as a receptor for endogenous enkephalins and for a subset of other opioids. Ligand binding causes a conformation change that triggers signaling via guanine nucleotide-binding proteins (G proteins) and modulates the activity of down-stream effectors, such as adenylate cyclase. Signaling leads to the inhibition of adenylate cyclase activity. Inhibits neurotransmitter release by reducing calcium ion currents and increasing potassium ion conductance. Plays a role in the perception of pain and in opiate-mediated analgesia. Plays a role in developing analgesic tolerance to morphine. This chain is Delta-type opioid receptor (Oprd1), found in Rattus norvegicus (Rat).